Here is a 234-residue protein sequence, read N- to C-terminus: UPF0173 metal-dependent hydrolase Rleg2_1519 (234 aa).

The protein belongs to the UPF0173 family.

This chain is UPF0173 metal-dependent hydrolase Rleg2_1519, found in Rhizobium leguminosarum bv. trifolii (strain WSM2304).